A 33-amino-acid chain; its full sequence is Defensin-1 (33 aa).

Cystine bridges form between Cys-4/Cys-32, Cys-6/Cys-21, and Cys-11/Cys-31.

It belongs to the alpha-defensin family.

The protein resides in the secreted. In terms of biological role, has antibacterial activity against the Gram-negative bacterium E.coli and the Gram-positive bacteria L.monocytogenes and S.aureus. Has antifungal activity against C.albicans. This is Defensin-1 from Papio hamadryas (Hamadryas baboon).